The chain runs to 416 residues: MDKLLIQGGHRLSGEIAISGAKNAALPILCAGLLTADTVQLSNVPNLQDVTTILRLLRQMGLRAEQDGDKVVLNGSAIDKLEAPYEMVKTMRASILVLGPLLARFGEAKVSLPGGCAIGSRPVDQHIKGLQAMGAEVTIEAGYIHAKAKKLKGTRIVTDMITVTGTENLLMAATLADGETILENAAREPEVTDLANLLVAMGAKIEGIGTDRLVIQGVERLHGATHAVIADRIETATFMCAVATVGGDVTLRNARTDTLDVAFDKLREAGAILTSGDDWIRVQMASRPKAVSFRTTEYPGFPTDMQAQFMAMNCVAEGSSRVIETIFENRFMHVQEMNRLGAAITIEGHTAIINGVDKLVGAPVMATDLRASASLVIAALAAEGETLIDRIYHLDRGYDRMEVKLSAVGAQIQRVK.

22 to 23 (KN) is a binding site for phosphoenolpyruvate. Position 92 (Arg-92) interacts with UDP-N-acetyl-alpha-D-glucosamine. Residue Cys-116 is the Proton donor of the active site. Position 116 is a 2-(S-cysteinyl)pyruvic acid O-phosphothioketal (Cys-116). Residues 121–125 (RPVDQ), Asp-304, and Ile-326 contribute to the UDP-N-acetyl-alpha-D-glucosamine site.

The protein belongs to the EPSP synthase family. MurA subfamily.

It localises to the cytoplasm. It catalyses the reaction phosphoenolpyruvate + UDP-N-acetyl-alpha-D-glucosamine = UDP-N-acetyl-3-O-(1-carboxyvinyl)-alpha-D-glucosamine + phosphate. The protein operates within cell wall biogenesis; peptidoglycan biosynthesis. In terms of biological role, cell wall formation. Adds enolpyruvyl to UDP-N-acetylglucosamine. The protein is UDP-N-acetylglucosamine 1-carboxyvinyltransferase of Janthinobacterium sp. (strain Marseille) (Minibacterium massiliensis).